Reading from the N-terminus, the 365-residue chain is Chorismate synthase (365 aa).

NADP(+)-binding residues include Arg-48 and Arg-54. FMN-binding positions include 125–127, 237–238, Gly-277, 292–296, and Arg-318; these read RSS, NA, and KPTSS.

Belongs to the chorismate synthase family. In terms of assembly, homotetramer. FMNH2 is required as a cofactor.

It catalyses the reaction 5-O-(1-carboxyvinyl)-3-phosphoshikimate = chorismate + phosphate. The protein operates within metabolic intermediate biosynthesis; chorismate biosynthesis; chorismate from D-erythrose 4-phosphate and phosphoenolpyruvate: step 7/7. In terms of biological role, catalyzes the anti-1,4-elimination of the C-3 phosphate and the C-6 proR hydrogen from 5-enolpyruvylshikimate-3-phosphate (EPSP) to yield chorismate, which is the branch point compound that serves as the starting substrate for the three terminal pathways of aromatic amino acid biosynthesis. This reaction introduces a second double bond into the aromatic ring system. The protein is Chorismate synthase of Polaromonas naphthalenivorans (strain CJ2).